A 343-amino-acid chain; its full sequence is MKVSIIGATGYGGLELIRLLHQHSSVDIATLHSFSAQSETLANFYPHLKGLEASPLEKINPAEIIEKSDTVFIATPSGIAKDVALPYIDAGLNVIDLSGDFRLKDNQLYEKWYGKKAAPEDYLAKAEYGLAEFRDNELATFIANPGCYATATLLGLAPLVKKQLIDPTSIIVDAKSGISGAGKVPSKSTHFTETNENMTLYKMNSHQHIPEIMQQLTKWDKSIPAIQFSTSLIPITRGIFTTIYVKPKNPITQQELHQLYESTYEHASFVRIQAENTYPTVKQVTASNYCDIGLAYNEKTNVITIVSVIDNLVKGAAGQAIQNLNIMANFAESDGLGFIPVYP.

Cys147 is an active-site residue.

It belongs to the NAGSA dehydrogenase family. Type 1 subfamily.

It localises to the cytoplasm. It carries out the reaction N-acetyl-L-glutamate 5-semialdehyde + phosphate + NADP(+) = N-acetyl-L-glutamyl 5-phosphate + NADPH + H(+). It functions in the pathway amino-acid biosynthesis; L-arginine biosynthesis; N(2)-acetyl-L-ornithine from L-glutamate: step 3/4. Catalyzes the NADPH-dependent reduction of N-acetyl-5-glutamyl phosphate to yield N-acetyl-L-glutamate 5-semialdehyde. This Listeria innocua serovar 6a (strain ATCC BAA-680 / CLIP 11262) protein is N-acetyl-gamma-glutamyl-phosphate reductase.